The primary structure comprises 446 residues: Phosphoglucosamine mutase (446 aa).

Ser101 serves as the catalytic Phosphoserine intermediate. Mg(2+) is bound by residues Ser101, Asp240, Asp242, and Asp244. Residue Ser101 is modified to Phosphoserine.

This sequence belongs to the phosphohexose mutase family. Requires Mg(2+) as cofactor. Activated by phosphorylation.

The catalysed reaction is alpha-D-glucosamine 1-phosphate = D-glucosamine 6-phosphate. In terms of biological role, catalyzes the conversion of glucosamine-6-phosphate to glucosamine-1-phosphate. The chain is Phosphoglucosamine mutase from Pseudomonas putida (strain W619).